The sequence spans 666 residues: Fructose-1,6-bisphosphatase class 3 (666 aa).

It belongs to the FBPase class 3 family. Mn(2+) serves as cofactor.

The enzyme catalyses beta-D-fructose 1,6-bisphosphate + H2O = beta-D-fructose 6-phosphate + phosphate. Its pathway is carbohydrate biosynthesis; gluconeogenesis. The polypeptide is Fructose-1,6-bisphosphatase class 3 (Phocaeicola vulgatus (strain ATCC 8482 / DSM 1447 / JCM 5826 / CCUG 4940 / NBRC 14291 / NCTC 11154) (Bacteroides vulgatus)).